The chain runs to 167 residues: N5-carboxyaminoimidazole ribonucleotide mutase (167 aa).

Residues Ser11, Asp14, and Arg41 each contribute to the substrate site.

It belongs to the AIR carboxylase family. Class I subfamily.

The catalysed reaction is 5-carboxyamino-1-(5-phospho-D-ribosyl)imidazole + H(+) = 5-amino-1-(5-phospho-D-ribosyl)imidazole-4-carboxylate. It functions in the pathway purine metabolism; IMP biosynthesis via de novo pathway; 5-amino-1-(5-phospho-D-ribosyl)imidazole-4-carboxylate from 5-amino-1-(5-phospho-D-ribosyl)imidazole (N5-CAIR route): step 2/2. Catalyzes the conversion of N5-carboxyaminoimidazole ribonucleotide (N5-CAIR) to 4-carboxy-5-aminoimidazole ribonucleotide (CAIR). This Aquifex aeolicus (strain VF5) protein is N5-carboxyaminoimidazole ribonucleotide mutase.